The sequence spans 178 residues: Cysteine-rich venom protein VAR3 (178 aa).

An N-terminal signal peptide occupies residues 1–22 (MILLKLYLTLAAILCQSRGTTS). One can recognise an SCP domain in the interval 41-169 (NKHNDLRRTV…PLKYFLVCQY (129 aa)). 3 disulfide bridges follow: Cys77–Cys156, Cys95–Cys170, and Cys151–Cys167.

This sequence belongs to the CRISP family. Post-translationally, contains 8 disulfide bonds. In terms of tissue distribution, expressed by the venom gland.

The protein localises to the secreted. In terms of biological role, blocks ryanodine receptors, and potassium channels. The protein is Cysteine-rich venom protein VAR3 of Varanus acanthurus (Ridge-tailed monitor).